The chain runs to 131 residues: Hypocretin neuropeptide precursor (131 aa).

An N-terminal signal peptide occupies residues 1–33 (MNPPFAKVSWATVTLLLLLLLLPPAVLSPGAAA). A Pyrrolidone carboxylic acid modification is found at Gln34. 2 disulfides stabilise this stretch: Cys39–Cys45 and Cys40–Cys47. Leu66 bears the Leucine amide mark. A Methionine amide modification is found at Met97. Residues 98 to 131 (GRRAGAEPAPRLCPGRRCLAAAASSVAPGGRSGI) constitute a propeptide, removed in mature form.

It belongs to the orexin family. Post-translationally, specific enzymatic cleavages at paired basic residues yield the different active peptides.

It localises to the rough endoplasmic reticulum. The protein localises to the cytoplasmic vesicle. The protein resides in the synapse. Neuropeptides that play a significant role in the regulation of food intake and sleep-wakefulness, possibly by coordinating the complex behavioral and physiologic responses of these complementary homeostatic functions. A broader role in the homeostatic regulation of energy metabolism, autonomic function, hormonal balance and the regulation of body fluids, is also suggested. In terms of biological role, binds to orexin receptors HCRTR1/OX1R and HCRTR2/OX2R with a high affinity. Stimulates food intake. Modulates pituitary luteinizing hormone secretion in an ovarian steroid-dependent manner. Functionally, binds to orexin receptor HCRTR2/OX2R only. Stimulates food intake. Modulates pituitary luteinizing hormone secretion in an ovarian steroid-dependent manner. This is Hypocretin neuropeptide precursor (HCRT) from Sus scrofa (Pig).